A 315-amino-acid chain; its full sequence is Methionyl-tRNA formyltransferase (315 aa).

The N-terminal domain stretch occupies residues 2-189 (SDSLRIIFAG…LITTLKQLAD (188 aa)). 113-116 (SLLP) lines the (6S)-5,6,7,8-tetrahydrofolate pocket. Residues 210–315 (KEEARIDWSL…EWFIPGNRLA (106 aa)) are C-terminal domain.

It belongs to the Fmt family.

The catalysed reaction is L-methionyl-tRNA(fMet) + (6R)-10-formyltetrahydrofolate = N-formyl-L-methionyl-tRNA(fMet) + (6S)-5,6,7,8-tetrahydrofolate + H(+). Its function is as follows. Attaches a formyl group to the free amino group of methionyl-tRNA(fMet). The formyl group appears to play a dual role in the initiator identity of N-formylmethionyl-tRNA by promoting its recognition by IF2 and preventing the misappropriation of this tRNA by the elongation apparatus. In Salmonella typhi, this protein is Methionyl-tRNA formyltransferase.